Here is a 994-residue protein sequence, read N- to C-terminus: Regulator of telomere elongation helicase 1 homolog (994 aa).

A Helicase ATP-binding domain is found at 15 to 300; the sequence is PKLSVKFPFE…EETARSEADA (286 aa). 50–57 provides a ligand contact to ATP; it reads SPTGTGKT. [4Fe-4S] cluster-binding residues include C142, C160, C169, and C208. Residues 251-254 carry the DEAH box motif; it reads DEAH. Residues 876 to 895 form a disordered region; that stretch reads FKIETPGPSTSTLTQKSEPP. A compositionally biased stretch (polar residues) spans 882–892; it reads GPSTSTLTQKS.

It belongs to the helicase family. RAD3/XPD subfamily.

It is found in the nucleus. It carries out the reaction ATP + H2O = ADP + phosphate + H(+). Its function is as follows. A probable ATP-dependent DNA helicase implicated in DNA repair and the maintenance of genomic stability. Acts as an anti-recombinase to counteract toxic recombination and limit crossover during meiosis. Regulates meiotic recombination and crossover homeostasis by physically dissociating strand invasion events and thereby promotes noncrossover repair by meiotic synthesis dependent strand annealing (SDSA) as well as disassembly of D loop recombination intermediates. In Caenorhabditis elegans, this protein is Regulator of telomere elongation helicase 1 homolog.